The primary structure comprises 746 residues: Tudor domain-containing protein krimp (746 aa).

The involved in homooligomerization stretch occupies residues 1–310; that stretch reads MNLEDISMIM…RDIYNQILKD (310 aa). The interval 311 to 489 is non-canonical tudor domain; that stretch reads MAAFPENTIV…PAGITEDDMA (179 aa). The C3H1-type zinc finger occupies 511 to 540; the sequence is KDEQRICRHYDPKLNGCFKGNNCRFAHEPF. The 58-residue stretch at 613–670 folds into the Tudor domain; sequence KPRLLDIVLALYSDGCFYRAQIIDEFPSEYMIFYVDYGNTEFVPLSCLAPCENVDSFK.

It belongs to the Tudor domain containing protein family. Homooligomerizes (via N-terminus). Component of the ping-pong piRNA processing (4P) complex consisting of krimp, aub and AGO3; a single molecule of krimp can bind both aub and AGO3 without the need for homooligomerization. Interacts (via canonical tudor domain) with aub (via N-terminus when symmetrically dimethylated on arginine residues). Interacts (via non-canonical tudor domain) with AGO3 (via N-terminus when unmethylated on arginine residues); this interaction leads to symmetrical dimethylation on AGO3 arginine residues and its subsequent dissociation from krimp. Krimp associated AGO3 is mostly free of piRNA binding and the interaction plays an important role in the loading of AGO3 with piRNAs; piRNA binding stimulates methylation of ACO3 by the csul/PRMT5 methylosome complex and promotes dissociation of the two proteins. Widely expressed in female germline cells, including differentiating germ cells in germarium and egg chambers (at protein level).

The protein resides in the cytoplasm. The protein localises to the perinuclear region. Its subcellular location is the cytoplasmic ribonucleoprotein granule. Stable structural component of the perinuclear meiotic nuage, a germline-specific subcellular membraneless ribonucleoprotein compartment involved in production of transposable element-repressing Piwi-interacting RNA (piRNA)-induced silencing complexes (piRISCs), which are essential for maintaining germline integrity during oogenesis. Scaffold component of the ping-pong piRNA processing (4P) complex that recruits the Piwi proteins aub and AGO3 to specific subregions of the nuage where it coordinates their activity in the ping-pong amplification step of secondary piRNA biogenesis. Binds methylated aub, which is associated with piRNA, and unmethylated AGO3, which is not associated with piRNA, bringing the Piwi proteins into close proximity and facilitating the loading of freshly cut piRNAs generated by aub onto AGO3. Promotes asymmetric ping-pong amplification by aub and AGO3 to bias production towards antisense piRNAs capable of silencing transposable elements. Required for symmetrical dimethylation of AGO3, probably by recruitment to the nuage where methylosome components are located; dimethylation promotes AGO3 dissociation and interaction with other tudor-domain containing proteins such as tud. Required for the recruitment of mael to the perinuclear meiotic nuage. Required for the recruitment of aub to the nuage in testes but not in ovaries. Involved in repression of long interspersed nuclear elements (LINEs) including HeT-A, I-element LINEs and possibly mst40, but not TART LINEs. This is Tudor domain-containing protein krimp from Drosophila melanogaster (Fruit fly).